The primary structure comprises 255 residues: 5'-nucleotidase SurE (255 aa).

4 residues coordinate a divalent metal cation: Asp8, Asp9, Ser40, and Asn93.

This sequence belongs to the SurE nucleotidase family. A divalent metal cation serves as cofactor.

The protein localises to the cytoplasm. It carries out the reaction a ribonucleoside 5'-phosphate + H2O = a ribonucleoside + phosphate. In terms of biological role, nucleotidase that shows phosphatase activity on nucleoside 5'-monophosphates. In Rhodopseudomonas palustris (strain BisB5), this protein is 5'-nucleotidase SurE.